Here is a 138-residue protein sequence, read N- to C-terminus: Transcriptional regulator MraZ (138 aa).

2 consecutive SpoVT-AbrB domains span residues 3 to 45 (EFQH…PLAE) and 74 to 117 (ATEC…AAER).

Belongs to the MraZ family. Forms oligomers.

Its subcellular location is the cytoplasm. It is found in the nucleoid. This Symbiobacterium thermophilum (strain DSM 24528 / JCM 14929 / IAM 14863 / T) protein is Transcriptional regulator MraZ.